The primary structure comprises 213 residues: Small ribosomal subunit protein uS3c (213 aa).

Residues 39–109 (IRKYLNAKLA…KFRITITYLQ (71 aa)) enclose the KH type-2 domain.

This sequence belongs to the universal ribosomal protein uS3 family. In terms of assembly, part of the 30S ribosomal subunit.

Its subcellular location is the plastid. The protein resides in the chloroplast. The protein is Small ribosomal subunit protein uS3c (rps3) of Mesostigma viride (Green alga).